A 323-amino-acid polypeptide reads, in one-letter code: Cobalamin biosynthesis protein CobD (323 aa).

5 consecutive transmembrane segments (helical) span residues 52 to 72, 73 to 93, 154 to 174, 214 to 234, and 294 to 314; these read IAGV…TWLM, VWGS…LLSS, DGII…GMAF, ALLM…AASI, and IRLM…TAAL.

This sequence belongs to the CobD/CbiB family.

The protein resides in the cell membrane. It participates in cofactor biosynthesis; adenosylcobalamin biosynthesis. In terms of biological role, converts cobyric acid to cobinamide by the addition of aminopropanol on the F carboxylic group. This is Cobalamin biosynthesis protein CobD from Pelobacter propionicus (strain DSM 2379 / NBRC 103807 / OttBd1).